The primary structure comprises 388 residues: AT-rich binding protein (388 aa).

A C2H2-type 1 zinc finger spans residues 29–52 (IVCHTCQEELQTQDQFWKHIQDEH). Low complexity-rich tracts occupy residues 138–165 (QQHQ…LQQQ) and 249–265 (VSVS…STTP). Disordered stretches follow at residues 138 to 168 (QQHQ…QRDV) and 240 to 265 (PPPP…STTP). C2H2-type zinc fingers lie at residues 321–345 (YVCD…RVVH) and 351–374 (FNCE…KKKH).

It localises to the nucleus. Functionally, may be a transcription factor for genes having (A+T) stretches in their promoter and/or enhancer regions. Binds to AT rich DNA. This Drosophila melanogaster (Fruit fly) protein is AT-rich binding protein.